We begin with the raw amino-acid sequence, 369 residues long: Glycerol-3-phosphate dehydrogenase [NAD(P)+] (369 aa).

Residues serine 6, tryptophan 7, arginine 27, arginine 28, and lysine 101 each coordinate NADPH. Sn-glycerol 3-phosphate contacts are provided by lysine 101 and glycine 131. Alanine 135 lines the NADPH pocket. Sn-glycerol 3-phosphate contacts are provided by lysine 186, aspartate 239, serine 249, arginine 250, and asparagine 251. The active-site Proton acceptor is the lysine 186. Arginine 250 contributes to the NADPH binding site. Glutamate 276 contributes to the NADPH binding site. The tract at residues 312–369 is disordered; sequence KDIAPHLTTDDEPQGERTRGERTTDDGQGQGRTSVWGSLKRAFDQLRDGGGSSRRDRP. Composition is skewed to basic and acidic residues over residues 325–336 and 352–369; these read QGERTRGERTTD and RAFD…RDRP.

Belongs to the NAD-dependent glycerol-3-phosphate dehydrogenase family.

It is found in the cytoplasm. It carries out the reaction sn-glycerol 3-phosphate + NAD(+) = dihydroxyacetone phosphate + NADH + H(+). It catalyses the reaction sn-glycerol 3-phosphate + NADP(+) = dihydroxyacetone phosphate + NADPH + H(+). It participates in membrane lipid metabolism; glycerophospholipid metabolism. Catalyzes the reduction of the glycolytic intermediate dihydroxyacetone phosphate (DHAP) to sn-glycerol 3-phosphate (G3P), the key precursor for phospholipid synthesis. This is Glycerol-3-phosphate dehydrogenase [NAD(P)+] from Leifsonia xyli subsp. xyli (strain CTCB07).